The following is a 121-amino-acid chain: Large ribosomal subunit protein uL22 (121 aa).

Belongs to the universal ribosomal protein uL22 family. As to quaternary structure, part of the 50S ribosomal subunit.

Functionally, this protein binds specifically to 23S rRNA; its binding is stimulated by other ribosomal proteins, e.g. L4, L17, and L20. It is important during the early stages of 50S assembly. It makes multiple contacts with different domains of the 23S rRNA in the assembled 50S subunit and ribosome. In terms of biological role, the globular domain of the protein is located near the polypeptide exit tunnel on the outside of the subunit, while an extended beta-hairpin is found that lines the wall of the exit tunnel in the center of the 70S ribosome. The chain is Large ribosomal subunit protein uL22 from Hydrogenobaculum sp. (strain Y04AAS1).